A 349-amino-acid polypeptide reads, in one-letter code: D-alanine--D-alanine ligase (349 aa).

Positions 140 to 345 (NILFEAMGIP…MKDVFTWLLE (206 aa)) constitute an ATP-grasp domain. Residue 169-224 (NLSFSYPVFIKPTLGGSSVNTGMAKTAEEAMTLVDKIFVTDDRVLVQKLVSGTEVS) participates in ATP binding. Mg(2+) is bound by residues Asp-300, Glu-312, and Asn-314.

It belongs to the D-alanine--D-alanine ligase family. Requires Mg(2+) as cofactor. It depends on Mn(2+) as a cofactor.

The protein resides in the cytoplasm. It catalyses the reaction 2 D-alanine + ATP = D-alanyl-D-alanine + ADP + phosphate + H(+). The protein operates within cell wall biogenesis; peptidoglycan biosynthesis. Functionally, cell wall formation. In Leptospira biflexa serovar Patoc (strain Patoc 1 / Ames), this protein is D-alanine--D-alanine ligase.